A 118-amino-acid chain; its full sequence is Large ribosomal subunit protein uL18 (118 aa).

It belongs to the universal ribosomal protein uL18 family. As to quaternary structure, part of the 50S ribosomal subunit; part of the 5S rRNA/L5/L18/L25 subcomplex. Contacts the 5S and 23S rRNAs.

Functionally, this is one of the proteins that bind and probably mediate the attachment of the 5S RNA into the large ribosomal subunit, where it forms part of the central protuberance. The protein is Large ribosomal subunit protein uL18 of Rickettsia felis (strain ATCC VR-1525 / URRWXCal2) (Rickettsia azadi).